The following is a 312-amino-acid chain: Pantothenate kinase (312 aa).

97 to 104 serves as a coordination point for ATP; sequence GSVAVGKS.

It belongs to the prokaryotic pantothenate kinase family.

The protein localises to the cytoplasm. The catalysed reaction is (R)-pantothenate + ATP = (R)-4'-phosphopantothenate + ADP + H(+). Its pathway is cofactor biosynthesis; coenzyme A biosynthesis; CoA from (R)-pantothenate: step 1/5. This chain is Pantothenate kinase, found in Mycobacterium marinum (strain ATCC BAA-535 / M).